The chain runs to 413 residues: Serine hydroxymethyltransferase (413 aa).

Residues Leu117 and Gly121–Leu123 contribute to the (6S)-5,6,7,8-tetrahydrofolate site. Lys226 is subject to N6-(pyridoxal phosphate)lysine. Residues Glu239 and Ser349–Phe351 each bind (6S)-5,6,7,8-tetrahydrofolate.

The protein belongs to the SHMT family. As to quaternary structure, homodimer. Requires pyridoxal 5'-phosphate as cofactor.

The protein localises to the cytoplasm. It carries out the reaction (6R)-5,10-methylene-5,6,7,8-tetrahydrofolate + glycine + H2O = (6S)-5,6,7,8-tetrahydrofolate + L-serine. Its pathway is one-carbon metabolism; tetrahydrofolate interconversion. The protein operates within amino-acid biosynthesis; glycine biosynthesis; glycine from L-serine: step 1/1. Catalyzes the reversible interconversion of serine and glycine with tetrahydrofolate (THF) serving as the one-carbon carrier. This reaction serves as the major source of one-carbon groups required for the biosynthesis of purines, thymidylate, methionine, and other important biomolecules. Also exhibits THF-independent aldolase activity toward beta-hydroxyamino acids, producing glycine and aldehydes, via a retro-aldol mechanism. The chain is Serine hydroxymethyltransferase from Bacillus cereus (strain G9842).